The following is a 436-amino-acid chain: Acrosin (436 aa).

A signal peptide spans 1 to 19; that stretch reads MVEMLPTVAVLVLAVSVVA. Residue Asn-22 is glycosylated (N-linked (GlcNAc...) asparagine). 6 cysteine pairs are disulfide-bonded: Cys-25/Cys-155, Cys-29/Cys-163, Cys-74/Cys-90, Cys-178/Cys-247, Cys-210/Cys-226, and Cys-237/Cys-267. The Peptidase S1 domain occupies 43 to 291; that stretch reads IVSGQSAQLG…YLDWIASKIG (249 aa). Residues His-89 and Asp-143 each act as charge relay system in the active site. Asn-211 is a glycosylation site (N-linked (GlcNAc...) asparagine). The active-site Charge relay system is Ser-241. The propeptide at 346-436 is pro-rich; sequence PSSTQTSSSL…NKPSEPFLHS (91 aa).

It belongs to the peptidase S1 family. Heavy chain (catalytic) and a light chain linked by two disulfide bonds. Forms a heterodimer with SERPINA5.

The enzyme catalyses Preferential cleavage: Arg-|-Xaa, Lys-|-Xaa.. Inhibited by SERPINA5. Acrosin is the major protease of mammalian spermatozoa. It is a serine protease of trypsin-like cleavage specificity, it is synthesized in a zymogen form, proacrosin and stored in the acrosome. This chain is Acrosin (Acr), found in Mus musculus (Mouse).